Here is a 307-residue protein sequence, read N- to C-terminus: Ornithine carbamoyltransferase (307 aa).

Residues Ser-50–Thr-53, Gln-77, Arg-101, and His-128–Gln-131 contribute to the carbamoyl phosphate site. L-ornithine is bound by residues Asn-160, Asp-224, and Ser-228–Met-229. Carbamoyl phosphate is bound by residues Cys-264–Leu-265 and Arg-292.

This sequence belongs to the aspartate/ornithine carbamoyltransferase superfamily. OTCase family. As to quaternary structure, homotrimer.

Its subcellular location is the cytoplasm. The catalysed reaction is carbamoyl phosphate + L-ornithine = L-citrulline + phosphate + H(+). It functions in the pathway amino-acid biosynthesis; L-arginine biosynthesis; L-arginine from L-ornithine and carbamoyl phosphate: step 1/3. Functionally, reversibly catalyzes the transfer of the carbamoyl group from carbamoyl phosphate (CP) to the N(epsilon) atom of ornithine (ORN) to produce L-citrulline, which is a substrate for argininosuccinate synthetase, the enzyme involved in the final step in arginine biosynthesis. This chain is Ornithine carbamoyltransferase (argF), found in Mycobacterium bovis (strain ATCC BAA-935 / AF2122/97).